Reading from the N-terminus, the 420-residue chain is MGQETEISKRYQVAKERYQAIGVDTEKALKTLKDIKISMHCWQGDDVKGFLNPDGELTGGIMATGNYPGAAHTPKQLRQDLEKAYSLIPGKHKLNLHAIYVDTDEKVDLNEIEPKHFTPWVEWAKEQGLGLDFNPTFFSHPMFKDNYTLASPDKEVRDFWIEHGKRSRKISEYFGKELGQTSINNFWVPDGIKDCPIDRYTPRKRLMEALDEVFAEKLDEKYTQEAVESKLFGLGAEAYTVGSHEFYMGYGITRDKLICLDAGHFHPTEVISNKLSSLALFSKGVMLHVSRPVRWDSDHVVIMDDELIEIGRELVRNDLLGITNIGLDFFDATINRIAAWVVGTRNTQKSLLKALLEPTADLKKMELENDFTSRMAITEELKDFPFGDVWNYFCEINGVPVGLDWLKEVKAYEKDVLLKR.

Residues His-264, Asp-296, and Asp-298 each coordinate Mn(2+).

This sequence belongs to the rhamnose isomerase family. Mn(2+) is required as a cofactor.

It is found in the cytoplasm. It carries out the reaction L-rhamnopyranose = L-rhamnulose. It participates in carbohydrate degradation; L-rhamnose degradation; glycerone phosphate from L-rhamnose: step 1/3. Functionally, catalyzes the interconversion of L-rhamnose and L-rhamnulose. The chain is L-rhamnose isomerase from Listeria innocua serovar 6a (strain ATCC BAA-680 / CLIP 11262).